We begin with the raw amino-acid sequence, 240 residues long: Orotidine 5'-phosphate decarboxylase (240 aa).

Substrate-binding positions include Asp-15, Lys-37, 64-73 (DLKYHDIPNT), Thr-127, Arg-188, Gln-197, Gly-217, and Arg-218. Lys-66 acts as the Proton donor in catalysis.

It belongs to the OMP decarboxylase family. Type 1 subfamily. In terms of assembly, homodimer.

The catalysed reaction is orotidine 5'-phosphate + H(+) = UMP + CO2. The protein operates within pyrimidine metabolism; UMP biosynthesis via de novo pathway; UMP from orotate: step 2/2. In terms of biological role, catalyzes the decarboxylation of orotidine 5'-monophosphate (OMP) to uridine 5'-monophosphate (UMP). The polypeptide is Orotidine 5'-phosphate decarboxylase (Citrifermentans bemidjiense (strain ATCC BAA-1014 / DSM 16622 / JCM 12645 / Bem) (Geobacter bemidjiensis)).